The sequence spans 566 residues: Proline--tRNA ligase (566 aa).

Belongs to the class-II aminoacyl-tRNA synthetase family. ProS type 1 subfamily. In terms of assembly, homodimer.

It localises to the cytoplasm. It carries out the reaction tRNA(Pro) + L-proline + ATP = L-prolyl-tRNA(Pro) + AMP + diphosphate. Catalyzes the attachment of proline to tRNA(Pro) in a two-step reaction: proline is first activated by ATP to form Pro-AMP and then transferred to the acceptor end of tRNA(Pro). As ProRS can inadvertently accommodate and process non-cognate amino acids such as alanine and cysteine, to avoid such errors it has two additional distinct editing activities against alanine. One activity is designated as 'pretransfer' editing and involves the tRNA(Pro)-independent hydrolysis of activated Ala-AMP. The other activity is designated 'posttransfer' editing and involves deacylation of mischarged Ala-tRNA(Pro). The misacylated Cys-tRNA(Pro) is not edited by ProRS. The protein is Proline--tRNA ligase of Bacillus cereus (strain G9842).